The following is a 146-amino-acid chain: MAWDLFLWIVSFFVSLALVASVFYQVICLTDLEADYLNPFETSTRINRLVIPEFILQGSLCLLFLLTWHWVFFLVAVPVTVYHAMLYKERRYLIDVTEVFRGISFEKKLRYTKLGFYVFLFIMVVFRLTLSAVYSFTEDDDLLHLF.

3 helical membrane passes run 9 to 29, 61 to 81, and 114 to 134; these read IVSF…VICL, CLLF…PVTV, and LGFY…SAVY.

The protein belongs to the cornichon family.

The protein localises to the membrane. This Arabidopsis thaliana (Mouse-ear cress) protein is Protein cornichon homolog 1.